Consider the following 135-residue polypeptide: Envelope glycoprotein N (135 aa).

The signal sequence occupies residues methionine 1 to serine 19. Residues asparagine 20–serine 98 are Virion surface-facing. Positions asparagine 21 to threonine 68 are enriched in low complexity. The disordered stretch occupies residues asparagine 21–valine 73. Residues phenylalanine 99–leucine 119 form a helical membrane-spanning segment. Residues arginine 120–tyrosine 135 lie on the Intravirion side of the membrane.

This sequence belongs to the herpesviridae glycoprotein N family. Interacts (via N-terminus) with gM (via N-terminus). The gM-gN heterodimer forms the gCII complex. Post-translationally, O-glycosylated.

Its subcellular location is the virion membrane. It localises to the host membrane. The protein resides in the host Golgi apparatus. It is found in the host trans-Golgi network. In terms of biological role, envelope glycoprotein necessary for proper maturation of gM and modulation of its membrane fusion activity. Also plays a critical role in virion morphogenesis. The polypeptide is Envelope glycoprotein N (Homo sapiens (Human)).